The sequence spans 277 residues: Large ribosomal subunit protein uL2 (277 aa).

Disordered regions lie at residues 1–55 (MGIR…RHQG) and 217–277 (KRPS…KKKR). Over residues 37–55 (LHSKGGRNGHGRITARHQG) the composition is skewed to basic residues.

It belongs to the universal ribosomal protein uL2 family. As to quaternary structure, part of the 50S ribosomal subunit. Forms a bridge to the 30S subunit in the 70S ribosome.

In terms of biological role, one of the primary rRNA binding proteins. Required for association of the 30S and 50S subunits to form the 70S ribosome, for tRNA binding and peptide bond formation. It has been suggested to have peptidyltransferase activity; this is somewhat controversial. Makes several contacts with the 16S rRNA in the 70S ribosome. In Thermobifida fusca (strain YX), this protein is Large ribosomal subunit protein uL2.